Consider the following 299-residue polypeptide: Ribosomal protein L11 methyltransferase (299 aa).

Threonine 150, glycine 171, aspartate 193, and asparagine 234 together coordinate S-adenosyl-L-methionine.

It belongs to the methyltransferase superfamily. PrmA family.

It localises to the cytoplasm. It carries out the reaction L-lysyl-[protein] + 3 S-adenosyl-L-methionine = N(6),N(6),N(6)-trimethyl-L-lysyl-[protein] + 3 S-adenosyl-L-homocysteine + 3 H(+). Its function is as follows. Methylates ribosomal protein L11. The sequence is that of Ribosomal protein L11 methyltransferase from Dictyoglomus turgidum (strain DSM 6724 / Z-1310).